An 888-amino-acid polypeptide reads, in one-letter code: Valine--tRNA ligase (888 aa).

The short motif at 43-53 (PNVTGTLHLGH) is the 'HIGH' region element. Residues 538 to 542 (KMSKS) carry the 'KMSKS' region motif. Lys-541 contributes to the ATP binding site. Residues 821–888 (LIDLDAERAR…RLKAALGRLA (68 aa)) are a coiled coil.

This sequence belongs to the class-I aminoacyl-tRNA synthetase family. ValS type 1 subfamily. In terms of assembly, monomer.

Its subcellular location is the cytoplasm. The catalysed reaction is tRNA(Val) + L-valine + ATP = L-valyl-tRNA(Val) + AMP + diphosphate. Functionally, catalyzes the attachment of valine to tRNA(Val). As ValRS can inadvertently accommodate and process structurally similar amino acids such as threonine, to avoid such errors, it has a 'posttransfer' editing activity that hydrolyzes mischarged Thr-tRNA(Val) in a tRNA-dependent manner. The chain is Valine--tRNA ligase from Gluconobacter oxydans (strain 621H) (Gluconobacter suboxydans).